The chain runs to 550 residues: Hydroxylamine reductase (550 aa).

C3, C6, C18, and C25 together coordinate [2Fe-2S] cluster. 8 residues coordinate hybrid [4Fe-2O-2S] cluster: H249, E273, C317, C405, C433, C458, E492, and K494. C405 bears the Cysteine persulfide mark.

This sequence belongs to the HCP family. Requires [2Fe-2S] cluster as cofactor. The cofactor is hybrid [4Fe-2O-2S] cluster.

Its subcellular location is the cytoplasm. The enzyme catalyses A + NH4(+) + H2O = hydroxylamine + AH2 + H(+). Its function is as follows. Catalyzes the reduction of hydroxylamine to form NH(3) and H(2)O. In Shigella boydii serotype 18 (strain CDC 3083-94 / BS512), this protein is Hydroxylamine reductase.